A 206-amino-acid chain; its full sequence is Ribonuclease HII (206 aa).

An RNase H type-2 domain is found at 18–206; the sequence is LRIAGVDEVG…PVHNILYQEK (189 aa). A divalent metal cation is bound by residues Asp-24, Glu-25, and Asp-115.

Belongs to the RNase HII family. Requires Mn(2+) as cofactor. The cofactor is Mg(2+).

The protein localises to the cytoplasm. It catalyses the reaction Endonucleolytic cleavage to 5'-phosphomonoester.. Its function is as follows. Endonuclease that specifically degrades the RNA of RNA-DNA hybrids. The protein is Ribonuclease HII of Dinoroseobacter shibae (strain DSM 16493 / NCIMB 14021 / DFL 12).